The chain runs to 113 residues: Nucleoid-associated protein Cthe_2143 (113 aa).

The protein belongs to the YbaB/EbfC family. In terms of assembly, homodimer.

Its subcellular location is the cytoplasm. It is found in the nucleoid. In terms of biological role, binds to DNA and alters its conformation. May be involved in regulation of gene expression, nucleoid organization and DNA protection. This Acetivibrio thermocellus (strain ATCC 27405 / DSM 1237 / JCM 9322 / NBRC 103400 / NCIMB 10682 / NRRL B-4536 / VPI 7372) (Clostridium thermocellum) protein is Nucleoid-associated protein Cthe_2143.